Reading from the N-terminus, the 415-residue chain is Multidrug resistance protein MdtA (415 aa).

Positions 1–21 (MKGSYKSRWVIVIVVVIAAIA) are cleaved as a signal peptide. 2 disordered regions span residues 32-60 (SRSA…GPLA) and 392-415 (EAQS…GARS). A compositionally biased stretch (basic and acidic residues) spans 399–415 (PEEKATSREYAKKGARS).

It belongs to the membrane fusion protein (MFP) (TC 8.A.1) family. As to quaternary structure, part of a tripartite efflux system composed of MdtA, MdtB and MdtC.

Its subcellular location is the cell inner membrane. The MdtABC tripartite complex confers resistance against novobiocin and deoxycholate. The sequence is that of Multidrug resistance protein MdtA from Escherichia coli O81 (strain ED1a).